The primary structure comprises 373 residues: Enoyl-[acyl-carrier-protein] reductase, mitochondrial (373 aa).

A mitochondrion-targeting transit peptide spans methionine 1–aspartate 53. Lysine 61 bears the N6-acetyllysine; alternate mark. Residue lysine 61 is modified to N6-succinyllysine; alternate. Residue tyrosine 94 is the Proton donor of the active site. NADP(+)-binding positions include asparagine 167, asparagine 193–valine 196, and arginine 216–arginine 218. N6-acetyllysine; alternate occurs at positions 252 and 267. N6-succinyllysine; alternate is present on residues lysine 252 and lysine 267. Residues tyrosine 285 to methionine 288 and phenylalanine 310 to leucine 312 contribute to the NADP(+) site. Lysine 316 is subject to N6-succinyllysine. Lysine 368 provides a ligand contact to NADP(+).

Belongs to the zinc-containing alcohol dehydrogenase family. Quinone oxidoreductase subfamily. In terms of assembly, homodimer. In terms of tissue distribution, expressed in Purkinje cells (at protein level).

Its subcellular location is the mitochondrion. The catalysed reaction is a 2,3-saturated acyl-[ACP] + NADP(+) = a (2E)-enoyl-[ACP] + NADPH + H(+). It catalyses the reaction (2E)-butenoyl-[ACP] + NADPH + H(+) = butanoyl-[ACP] + NADP(+). It carries out the reaction (2E)-hexenoyl-[ACP] + NADPH + H(+) = hexanoyl-[ACP] + NADP(+). The enzyme catalyses (2E)-octenoyl-[ACP] + NADPH + H(+) = octanoyl-[ACP] + NADP(+). The catalysed reaction is (2E)-decenoyl-[ACP] + NADPH + H(+) = decanoyl-[ACP] + NADP(+). It catalyses the reaction (2E)-dodecenoyl-[ACP] + NADPH + H(+) = dodecanoyl-[ACP] + NADP(+). It carries out the reaction (2E)-tetradecenoyl-[ACP] + NADPH + H(+) = tetradecanoyl-[ACP] + NADP(+). The enzyme catalyses (2E)-hexadecenoyl-[ACP] + NADPH + H(+) = hexadecanoyl-[ACP] + NADP(+). Its function is as follows. Catalyzes the NADPH-dependent reduction of trans-2-enoyl thioesters in mitochondrial fatty acid synthesis (fatty acid synthesis type II). Fatty acid chain elongation in mitochondria uses acyl carrier protein (ACP) as an acyl group carrier, but the enzyme accepts both ACP and CoA thioesters as substrates in vitro. Displays a preference for medium-chain over short- and long-chain substrates. May provide the octanoyl chain used for lipoic acid biosynthesis, regulating protein lipoylation and mitochondrial respiratory activity particularly in Purkinje cells. Involved in iron homeostasis; affecting Fe-S cluster assembly and ceramide metabolism. Required for proper morphology and bioenergetic functions of mitochondria. Required for maintenance of neurons. The sequence is that of Enoyl-[acyl-carrier-protein] reductase, mitochondrial (Mecr) from Mus musculus (Mouse).